The primary structure comprises 206 residues: LexA repressor (206 aa).

The H-T-H motif DNA-binding region spans 29-49; the sequence is VREICEAVGLRSTSTVHGHLA. Residues serine 130 and lysine 167 each act as for autocatalytic cleavage activity in the active site.

The protein belongs to the peptidase S24 family. As to quaternary structure, homodimer.

It carries out the reaction Hydrolysis of Ala-|-Gly bond in repressor LexA.. Functionally, represses a number of genes involved in the response to DNA damage (SOS response), including recA and lexA. In the presence of single-stranded DNA, RecA interacts with LexA causing an autocatalytic cleavage which disrupts the DNA-binding part of LexA, leading to derepression of the SOS regulon and eventually DNA repair. The chain is LexA repressor from Alkaliphilus oremlandii (strain OhILAs) (Clostridium oremlandii (strain OhILAs)).